Consider the following 740-residue polypeptide: 1,4-alpha-glucan branching enzyme GlgB (740 aa).

Residue Asp419 is the Nucleophile of the active site. The Proton donor role is filled by Glu472.

It belongs to the glycosyl hydrolase 13 family. GlgB subfamily. Monomer.

The enzyme catalyses Transfers a segment of a (1-&gt;4)-alpha-D-glucan chain to a primary hydroxy group in a similar glucan chain.. Its pathway is glycan biosynthesis; glycogen biosynthesis. Its function is as follows. Catalyzes the formation of the alpha-1,6-glucosidic linkages in glycogen by scission of a 1,4-alpha-linked oligosaccharide from growing alpha-1,4-glucan chains and the subsequent attachment of the oligosaccharide to the alpha-1,6 position. This is 1,4-alpha-glucan branching enzyme GlgB from Paramagnetospirillum magneticum (strain ATCC 700264 / AMB-1) (Magnetospirillum magneticum).